We begin with the raw amino-acid sequence, 561 residues long: NADH-quinone oxidoreductase subunit C/D (561 aa).

Residues 1 to 152 (MLEKFSSKFN…YQVLYESDDL (152 aa)) are NADH dehydrogenase I subunit C. Residues 176-561 (KYTFLNIGPS…LNIIAGELDR (386 aa)) form an NADH dehydrogenase I subunit D region.

The protein in the N-terminal section; belongs to the complex I 30 kDa subunit family. It in the C-terminal section; belongs to the complex I 49 kDa subunit family. As to quaternary structure, NDH-1 is composed of 13 different subunits. Subunits NuoB, CD, E, F, and G constitute the peripheral sector of the complex.

The protein resides in the cell inner membrane. The enzyme catalyses a quinone + NADH + 5 H(+)(in) = a quinol + NAD(+) + 4 H(+)(out). Its function is as follows. NDH-1 shuttles electrons from NADH, via FMN and iron-sulfur (Fe-S) centers, to quinones in the respiratory chain. The immediate electron acceptor for the enzyme in this species is believed to be ubiquinone. Couples the redox reaction to proton translocation (for every two electrons transferred, four hydrogen ions are translocated across the cytoplasmic membrane), and thus conserves the redox energy in a proton gradient. This Campylobacter fetus subsp. fetus (strain 82-40) protein is NADH-quinone oxidoreductase subunit C/D.